Reading from the N-terminus, the 662-residue chain is Zinc finger protein 800 (662 aa).

The C2H2-type 1; degenerate zinc finger occupies 69 to 91; sequence FECKLCRSLFRGLPNLITHKKFY. Lys-132 participates in a covalent cross-link: Glycyl lysine isopeptide (Lys-Gly) (interchain with G-Cter in SUMO2). 2 disordered regions span residues 172–197 and 205–224; these read ETSSEQLKAVPDADTEVEEAIEPPSI and AAPTEEQPQESQADLETSDS. The segment covering 205–216 has biased composition (low complexity); sequence AAPTEEQPQESQ. Residues 231-254 form a C2H2-type 2 zinc finger; the sequence is LICCLCRKEFNSRRGVRRHIRKVH. Lys-280 is covalently cross-linked (Glycyl lysine isopeptide (Lys-Gly) (interchain with G-Cter in SUMO2)). A C2H2-type 3 zinc finger spans residues 288 to 311; sequence RSCPVCCKSFATKANVRRHFDEVH. Ser-318 is modified (phosphoserine). The tract at residues 319-349 is disordered; that stretch reads ITPDIATKPGQPLFLDSASPKKSFKTRKQKS. Thr-320 carries the post-translational modification Phosphothreonine. Position 337 is a phosphoserine (Ser-337). Residues 340–349 show a composition bias toward basic residues; sequence KSFKTRKQKS. The segment at 357–382 adopts a C2H2-type 4 zinc-finger fold; it reads TACKCLLCKRKYSSQIMLKRHMQIVH. The interval 389 to 473 is disordered; sequence ANSKREKGPN…AGGQQKTRKP (85 aa). A Glycyl lysine isopeptide (Lys-Gly) (interchain with G-Cter in SUMO2) cross-link involves residue Lys-392. Positions 414 to 434 are enriched in polar residues; that stretch reads VESSPPSITHSPQNELKGTNH. A phosphoserine mark is found at Ser-420, Ser-424, Ser-453, Ser-455, Ser-458, and Ser-460. Residues 456 to 468 show a composition bias toward low complexity; the sequence is PKSASPSAAGGQQ. Residue Lys-474 forms a Glycyl lysine isopeptide (Lys-Gly) (interchain with G-Cter in SUMO2) linkage. 2 C2H2-type zinc fingers span residues 484-506 and 517-540; these read LYCKLCKRQFTSKQNLTKHIELH and YKCPLCTYETRRKRDVIRHITVVH. Disordered regions lie at residues 573–597 and 633–662; these read RGPSREEAKHNDSKQDGTSNSPSKK and HHKKTHKANATNSPEGNKTKGRSTRSKALV. The span at 575-587 shows a compositional bias: basic and acidic residues; it reads PSREEAKHNDSKQ. A Glycyl lysine isopeptide (Lys-Gly) (interchain with G-Cter in SUMO2) cross-link involves residue Lys-597. Residues 616-638 form a C2H2-type 7 zinc finger; sequence HRCNKCGKAFAKKTYLEHHKKTH. Basic residues predominate over residues 651–662; that stretch reads TKGRSTRSKALV.

Belongs to the krueppel C2H2-type zinc-finger protein family.

It is found in the nucleus. In terms of biological role, may be involved in transcriptional regulation. The polypeptide is Zinc finger protein 800 (Znf800) (Mus musculus (Mouse)).